Consider the following 86-residue polypeptide: MGRTVKVGSAGRFGPRYGLKIRRRVAAVEARMKQKHVCPVCGRKAVRRISTGIWQCQKCGATFAGGAYLPTTPAGKVAKRVVASKA.

A C4-type zinc finger spans residues 38 to 59 (CPVCGRKAVRRISTGIWQCQKC).

It belongs to the eukaryotic ribosomal protein eL43 family. Zn(2+) is required as a cofactor.

The polypeptide is Large ribosomal subunit protein eL43 (Thermococcus gammatolerans (strain DSM 15229 / JCM 11827 / EJ3)).